We begin with the raw amino-acid sequence, 235 residues long: Urease accessory protein UreF (235 aa).

Belongs to the UreF family. As to quaternary structure, ureD, UreF and UreG form a complex that acts as a GTP-hydrolysis-dependent molecular chaperone, activating the urease apoprotein by helping to assemble the nickel containing metallocenter of UreC. The UreE protein probably delivers the nickel.

It is found in the cytoplasm. In terms of biological role, required for maturation of urease via the functional incorporation of the urease nickel metallocenter. The sequence is that of Urease accessory protein UreF from Haemophilus influenzae (strain 86-028NP).